The sequence spans 775 residues: Thiamine repressible genes regulatory protein thi1 (775 aa).

The zn(2)-C6 fungal-type DNA-binding region spans 39–65 (CKHCRQKKIKCNGGQPCISCKTLNIEC). Ser-208 carries the post-translational modification Phosphoserine. Disordered stretches follow at residues 676–695 (LTGE…FQPF) and 754–775 (NVSE…EKNG).

The protein resides in the nucleus. Its function is as follows. Transcription factor that activates the nmt1 promoter. Regulation of thiamine repressible genes. Positively regulates conjugation during meiosis. The sequence is that of Thiamine repressible genes regulatory protein thi1 (thi1) from Schizosaccharomyces pombe (strain 972 / ATCC 24843) (Fission yeast).